Here is a 417-residue protein sequence, read N- to C-terminus: Acetate kinase (417 aa).

Asparagine 9 lines the Mg(2+) pocket. Lysine 16 provides a ligand contact to ATP. Residue arginine 90 coordinates substrate. Aspartate 147 functions as the Proton donor/acceptor in the catalytic mechanism. ATP-binding positions include 207–211, 282–284, and 330–334; these read HIGNG, DLR, and GIGEN. Glutamate 384 provides a ligand contact to Mg(2+).

The protein belongs to the acetokinase family. In terms of assembly, homodimer. Mg(2+) is required as a cofactor. Mn(2+) serves as cofactor.

The protein localises to the cytoplasm. The enzyme catalyses acetate + ATP = acetyl phosphate + ADP. It participates in metabolic intermediate biosynthesis; acetyl-CoA biosynthesis; acetyl-CoA from acetate: step 1/2. Functionally, catalyzes the formation of acetyl phosphate from acetate and ATP. Can also catalyze the reverse reaction. The polypeptide is Acetate kinase (Staphylococcus epidermidis (strain ATCC 35984 / DSM 28319 / BCRC 17069 / CCUG 31568 / BM 3577 / RP62A)).